We begin with the raw amino-acid sequence, 359 residues long: GTPase Obg (359 aa).

The region spanning 1 to 159 is the Obg domain; sequence MQFIDQAEIQ…RSLRLELKLL (159 aa). An OBG-type G domain is found at 160 to 328; the sequence is AEVGIIGLPN…LLHQIWQELE (169 aa). GTP contacts are provided by residues 166–173, 191–195, 213–216, 280–283, and 309–311; these read GLPNAGKS, FTTLV, DIPG, NKID, and SAI. Mg(2+) contacts are provided by Ser173 and Thr193.

It belongs to the TRAFAC class OBG-HflX-like GTPase superfamily. OBG GTPase family. As to quaternary structure, monomer. Mg(2+) is required as a cofactor.

It is found in the cytoplasm. Functionally, an essential GTPase which binds GTP, GDP and possibly (p)ppGpp with moderate affinity, with high nucleotide exchange rates and a fairly low GTP hydrolysis rate. Plays a role in control of the cell cycle, stress response, ribosome biogenesis and in those bacteria that undergo differentiation, in morphogenesis control. In Cyanothece sp. (strain PCC 7425 / ATCC 29141), this protein is GTPase Obg.